The chain runs to 429 residues: Enolase (429 aa).

Glutamine 163 contributes to the (2R)-2-phosphoglycerate binding site. The Proton donor role is filled by glutamate 205. Aspartate 242, glutamate 285, and aspartate 312 together coordinate Mg(2+). 4 residues coordinate (2R)-2-phosphoglycerate: lysine 337, arginine 366, serine 367, and lysine 388. Residue lysine 337 is the Proton acceptor of the active site.

It belongs to the enolase family. Mg(2+) is required as a cofactor.

It is found in the cytoplasm. The protein localises to the secreted. It localises to the cell surface. The enzyme catalyses (2R)-2-phosphoglycerate = phosphoenolpyruvate + H2O. Its pathway is carbohydrate degradation; glycolysis; pyruvate from D-glyceraldehyde 3-phosphate: step 4/5. Functionally, catalyzes the reversible conversion of 2-phosphoglycerate (2-PG) into phosphoenolpyruvate (PEP). It is essential for the degradation of carbohydrates via glycolysis. The sequence is that of Enolase from Methylorubrum extorquens (strain CM4 / NCIMB 13688) (Methylobacterium extorquens).